The following is a 318-amino-acid chain: MSFRTQPPAPARLNRCQLFGPGSRPAIFEKMAQSAADVINLDLEDSVAPDDKPQARRNIIEASHNIDWGNKYLSVRINGLDTPFWYRDVVELLEDGSERIDQIMIPKVGCAADVYAVDALVTAIEAAKGRKKRISLEVIIESAAGIAHVEEIAAASPRLQAMSLGAADFAASMGMATTGIGGTQENYYMLHAGVKHWSDPWHWAQAAIVAACRTHGILPVDGPFGDFSDDEGFRAQALRSATLGMVGKWAIHPKQVALANEVFTPSDAAVAEAREILAAMEKAKAEGAGATVYKGRLVDIASIRQAEVIVRQAEMAKV.

The substrate site is built by Phe-19, Arg-24, Lys-30, and Arg-76. Residues Glu-141 and Asp-168 each coordinate Mg(2+). Residues 167 to 168 (AD) and 251 to 252 (IH) contribute to the substrate site.

Belongs to the HpcH/HpaI aldolase family. As to quaternary structure, homohexamer. Dimer of trimers. Mg(2+) is required as a cofactor. Requires Mn(2+) as cofactor.

The enzyme catalyses (S)-malyl-CoA = glyoxylate + acetyl-CoA. It carries out the reaction (2R,3S)-beta-methylmalyl-CoA = propanoyl-CoA + glyoxylate. With respect to regulation, in vitro inhibited by EDTA. Involved in the ethylmalonyl-CoA pathway for acetate assimilation. Catalyzes the reversible condensation of glyoxylate and acetyl-CoA to L-malyl-CoA and the reversible condensation of glyoxylate and propionyl-CoA to beta-methylmalyl-CoA. The protein is L-malyl-CoA/beta-methylmalyl-CoA lyase of Rhodobacter capsulatus (Rhodopseudomonas capsulata).